Reading from the N-terminus, the 402-residue chain is MRAAMNFRINNSLLIEAERDAVLELRHAMHREPELSNNEWKTQQRIRGMLERFGLKGATVFHNTGLYIDIEGSASGPKRAVAVRGDIDALPIQETRDDLPYQSHVEGVMHACGHDLHASIAMGVALAFHRMRNNFAGKLRVFFQPAEEAEPLGGRTVLEERLLEGFDNAVGFHVTPSIQVGKFGAREGAVSKSSDQFKVTVSGSAAHGSTPHNGIDAITIAAAFVNEVQKVISREVPVDDRSVITIGTIHGGEATNIICPKVVMEGTIRTTNPELRPLLSQRVREIAEGVAALHRGKAEVVVTSGEPAVINDPEMVRLFRDAVSDMAGSDALTQGKAISGSDDFGFYSQCIPSIYFWFGSGEPGNESGVHTPTFAVSDDVLIPTTELAVKYCFDLLHGQSAR.

The protein belongs to the peptidase M20 family.

This is an uncharacterized protein from Sinorhizobium fredii (strain NBRC 101917 / NGR234).